A 293-amino-acid chain; its full sequence is Ribonuclease HIII (293 aa).

In terms of domain architecture, RNase H type-2 spans 78 to 293 (LPLIGTDEVG…TEKAKKRLER (216 aa)). The a divalent metal cation site is built by aspartate 84, glutamate 85, and aspartate 187.

Belongs to the RNase HII family. RnhC subfamily. Requires Mn(2+) as cofactor. It depends on Mg(2+) as a cofactor.

The protein resides in the cytoplasm. It carries out the reaction Endonucleolytic cleavage to 5'-phosphomonoester.. Endonuclease that specifically degrades the RNA of RNA-DNA hybrids. In Streptococcus pneumoniae (strain 70585), this protein is Ribonuclease HIII.